The sequence spans 211 residues: ATP phosphoribosyltransferase (211 aa).

Belongs to the ATP phosphoribosyltransferase family. Short subfamily. As to quaternary structure, heteromultimer composed of HisG and HisZ subunits.

The protein localises to the cytoplasm. It catalyses the reaction 1-(5-phospho-beta-D-ribosyl)-ATP + diphosphate = 5-phospho-alpha-D-ribose 1-diphosphate + ATP. It functions in the pathway amino-acid biosynthesis; L-histidine biosynthesis; L-histidine from 5-phospho-alpha-D-ribose 1-diphosphate: step 1/9. In terms of biological role, catalyzes the condensation of ATP and 5-phosphoribose 1-diphosphate to form N'-(5'-phosphoribosyl)-ATP (PR-ATP). Has a crucial role in the pathway because the rate of histidine biosynthesis seems to be controlled primarily by regulation of HisG enzymatic activity. The chain is ATP phosphoribosyltransferase from Bacillus cereus (strain 03BB102).